A 101-amino-acid polypeptide reads, in one-letter code: Small ribosomal subunit protein uS14 (101 aa).

Belongs to the universal ribosomal protein uS14 family. In terms of assembly, part of the 30S ribosomal subunit. Contacts proteins S3 and S10.

In terms of biological role, binds 16S rRNA, required for the assembly of 30S particles and may also be responsible for determining the conformation of the 16S rRNA at the A site. In Brucella anthropi (strain ATCC 49188 / DSM 6882 / CCUG 24695 / JCM 21032 / LMG 3331 / NBRC 15819 / NCTC 12168 / Alc 37) (Ochrobactrum anthropi), this protein is Small ribosomal subunit protein uS14.